Reading from the N-terminus, the 298-residue chain is 4-hydroxy-tetrahydrodipicolinate synthase (298 aa).

Residue Thr45 coordinates pyruvate. Tyr133 functions as the Proton donor/acceptor in the catalytic mechanism. Lys161 serves as the catalytic Schiff-base intermediate with substrate. Ile203 contacts pyruvate.

The protein belongs to the DapA family. As to quaternary structure, homotetramer; dimer of dimers.

It localises to the cytoplasm. The catalysed reaction is L-aspartate 4-semialdehyde + pyruvate = (2S,4S)-4-hydroxy-2,3,4,5-tetrahydrodipicolinate + H2O + H(+). It participates in amino-acid biosynthesis; L-lysine biosynthesis via DAP pathway; (S)-tetrahydrodipicolinate from L-aspartate: step 3/4. Catalyzes the condensation of (S)-aspartate-beta-semialdehyde [(S)-ASA] and pyruvate to 4-hydroxy-tetrahydrodipicolinate (HTPA). The chain is 4-hydroxy-tetrahydrodipicolinate synthase from Wigglesworthia glossinidia brevipalpis.